A 368-amino-acid polypeptide reads, in one-letter code: Endophilin-A2 (368 aa).

Residues Met-1 to Val-21 are membrane-binding amphipathic helix. The BAR domain occupies Ser-18–Ser-249. Residues Pro-60–Pro-87 form a required for dimerization upon membrane association region. Residues Asp-180–Arg-250 are a coiled coil. Residues Leu-218 to Glu-254 form an interaction with ARC region. Residues Val-244–Asp-307 are disordered. Over residues Arg-245–Phe-263 the composition is skewed to basic and acidic residues. Phosphoserine occurs at positions 288 and 292. The SH3 domain maps to Leu-306–Pro-365. Phosphotyrosine is present on Tyr-315.

Belongs to the endophilin family. In terms of assembly, interacts with ARC, SYNJ1 and DNM1. Interacts with PDCD6IP. Interacts with BIN2.

The protein resides in the cytoplasm. It localises to the early endosome membrane. Its subcellular location is the cell projection. It is found in the podosome. Implicated in endocytosis. May recruit other proteins to membranes with high curvature. This chain is Endophilin-A2 (Sh3gl1), found in Mus musculus (Mouse).